Here is a 153-residue protein sequence, read N- to C-terminus: Ribonuclease H (153 aa).

The 141-residue stretch at 1-141 (MKLVEIFTDG…CDELAKAGAN (141 aa)) folds into the RNase H type-1 domain. The Mg(2+) site is built by Asp-9, Glu-47, Asp-69, and Asp-133.

This sequence belongs to the RNase H family. Monomer. The cofactor is Mg(2+).

It is found in the cytoplasm. It catalyses the reaction Endonucleolytic cleavage to 5'-phosphomonoester.. Functionally, endonuclease that specifically degrades the RNA of RNA-DNA hybrids. The sequence is that of Ribonuclease H from Actinobacillus pleuropneumoniae serotype 5b (strain L20).